The sequence spans 585 residues: ATP-dependent lipid A-core flippase (585 aa).

The next 6 helical transmembrane spans lie at 23–43, 64–84, 140–160, 163–183, 247–267, and 273–293; these read LAFGVAIIGMVGYSLIDAYVI, IAAYFVIPVFIARGIFNFMGT, AFLTLVREGALVFGLLFWMFY, WQLSLVFILIGPLVAMIVSVV, ILSVSSIQVIASVALAVVLYI, and FITDLTPGTFVTVVVAMTMLL. In terms of domain architecture, ABC transmembrane type-1 spans 27–308; sequence VAIIGMVGYS…LTTVNSEFQK (282 aa). The ABC transporter domain maps to 340–576; sequence LEFRDVTFHY…DGAYAQLHKL (237 aa). 374–381 is an ATP binding site; it reads GRSGSGKS.

This sequence belongs to the ABC transporter superfamily. Lipid exporter (TC 3.A.1.106) family. In terms of assembly, homodimer.

The protein localises to the cell inner membrane. It catalyses the reaction ATP + H2O + lipid A-core oligosaccharideSide 1 = ADP + phosphate + lipid A-core oligosaccharideSide 2.. Its function is as follows. Involved in lipopolysaccharide (LPS) biosynthesis. Translocates lipid A-core from the inner to the outer leaflet of the inner membrane. Transmembrane domains (TMD) form a pore in the inner membrane and the ATP-binding domain (NBD) is responsible for energy generation. The sequence is that of ATP-dependent lipid A-core flippase from Pseudoalteromonas atlantica (strain T6c / ATCC BAA-1087).